The following is a 1359-amino-acid chain: DNA-directed RNA polymerase subunit beta (1359 aa).

The protein belongs to the RNA polymerase beta chain family. As to quaternary structure, the RNAP catalytic core consists of 2 alpha, 1 beta, 1 beta' and 1 omega subunit. When a sigma factor is associated with the core the holoenzyme is formed, which can initiate transcription.

The enzyme catalyses RNA(n) + a ribonucleoside 5'-triphosphate = RNA(n+1) + diphosphate. In terms of biological role, DNA-dependent RNA polymerase catalyzes the transcription of DNA into RNA using the four ribonucleoside triphosphates as substrates. The polypeptide is DNA-directed RNA polymerase subunit beta (Nitrosococcus oceani (strain ATCC 19707 / BCRC 17464 / JCM 30415 / NCIMB 11848 / C-107)).